The following is a 210-amino-acid chain: Protein VNG_2543C (210 aa).

In terms of domain architecture, AMMECR1 spans 12 to 206 (EDGARTVELA…ETGDEDDPVE (195 aa)).

The chain is Protein VNG_2543C from Halobacterium salinarum (strain ATCC 700922 / JCM 11081 / NRC-1) (Halobacterium halobium).